Reading from the N-terminus, the 356-residue chain is Phosphoribosylformylglycinamidine cyclo-ligase (356 aa).

Belongs to the AIR synthase family.

It localises to the cytoplasm. The catalysed reaction is 2-formamido-N(1)-(5-O-phospho-beta-D-ribosyl)acetamidine + ATP = 5-amino-1-(5-phospho-beta-D-ribosyl)imidazole + ADP + phosphate + H(+). It functions in the pathway purine metabolism; IMP biosynthesis via de novo pathway; 5-amino-1-(5-phospho-D-ribosyl)imidazole from N(2)-formyl-N(1)-(5-phospho-D-ribosyl)glycinamide: step 2/2. The protein is Phosphoribosylformylglycinamidine cyclo-ligase of Acinetobacter baylyi (strain ATCC 33305 / BD413 / ADP1).